The chain runs to 231 residues: Orotidine 5'-phosphate decarboxylase (231 aa).

Residues Asp11, Lys34, 61–70, Thr117, Arg179, Gln188, Gly208, and Arg209 each bind substrate; that span reads DLKLHDIPNT. The active-site Proton donor is the Lys63.

Belongs to the OMP decarboxylase family. Type 1 subfamily. In terms of assembly, homodimer.

The catalysed reaction is orotidine 5'-phosphate + H(+) = UMP + CO2. Its pathway is pyrimidine metabolism; UMP biosynthesis via de novo pathway; UMP from orotate: step 2/2. Functionally, catalyzes the decarboxylation of orotidine 5'-monophosphate (OMP) to uridine 5'-monophosphate (UMP). This chain is Orotidine 5'-phosphate decarboxylase, found in Streptococcus thermophilus (strain CNRZ 1066).